The following is a 437-amino-acid chain: MTKMLKFLFKNKINVELSIKQYKLNLRNPFGTAHSVTTTRTNALIEIKVEDIRGFGECGLPPKKPLCYLADYNDIETYFNSWIKEIDEKQKQQQQQQEESYHYDAFNKISQKEYFKELRKEMNGDYQQSVYQFLFECLDNCKENSKDYSYASRCAIEMALLDGWGKFLKQPIYKLINIPESESLKPFYYTISMCPTMEEIMDSTDFGSKYTGFLKIKLDADVEKGMNIIDSVQKRLLNNNSTRTISKISVDANSSWTPSVARKYLEKLSPMADLISMVEQPFPIETLKTVNKDQKIDIQHLNEWVSIKKEYQDKGLLIFADESICTEKDLDGLVQLVHGVNIKLEKTGGIRPGLSTLLKAKELGLKTWIGSMVASSLNVSAAAHLLCSLSDFGGDLDGGLLIDDATQLFENDAFQLLDNGLIKMNSNNYGVGVTLKK.

Catalysis depends on K217, which acts as the Proton acceptor. Mn(2+)-binding residues include D251, E279, and D321. The active-site Proton donor is D395.

The protein belongs to the mandelate racemase/muconate lactonizing enzyme family.

This Dictyostelium discoideum (Social amoeba) protein is Enolase superfamily member DDB_G0284701.